Consider the following 816-residue polypeptide: Oxysterol-binding protein-related protein 1D (816 aa).

In terms of domain architecture, PH spans 92–229 (GAGVAGIMYK…WVEAFQVAKD (138 aa)). Residues 290–321 (KHIILLDTLRQLETEKIELEATVVDETKEHDS) adopt a coiled-coil conformation. Positions 340–362 (SASDSEADNESQDGADVESDEDD) are disordered. Acidic residues predominate over residues 344 to 362 (SEADNESQDGADVESDEDD). Positions 735 to 764 (NGEYESANAEKLRLEQLQRQARRLQEKGWK) form a coiled coil.

This sequence belongs to the OSBP family. Expressed in roots, leaves, stems and flowers.

Functionally, may be involved in the transport of sterols. The sequence is that of Oxysterol-binding protein-related protein 1D (ORP1D) from Arabidopsis thaliana (Mouse-ear cress).